A 286-amino-acid chain; its full sequence is Polyamine aminopropyltransferase (286 aa).

The PABS domain occupies 9-242 (NGWIDEHHQG…GWWSWTFAAI (234 aa)). Gln-36 is an S-methyl-5'-thioadenosine binding site. His-67 and Asp-91 together coordinate spermidine. S-methyl-5'-thioadenosine contacts are provided by residues Glu-111 and 143–144 (NG). The Proton acceptor role is filled by Asp-162. Position 169 (Pro-169) interacts with S-methyl-5'-thioadenosine.

Belongs to the spermidine/spermine synthase family. Homodimer or homotetramer.

Its subcellular location is the cytoplasm. It catalyses the reaction S-adenosyl 3-(methylsulfanyl)propylamine + putrescine = S-methyl-5'-thioadenosine + spermidine + H(+). It participates in amine and polyamine biosynthesis; spermidine biosynthesis; spermidine from putrescine: step 1/1. Functionally, catalyzes the irreversible transfer of a propylamine group from the amino donor S-adenosylmethioninamine (decarboxy-AdoMet) to putrescine (1,4-diaminobutane) to yield spermidine. In Prochlorococcus marinus (strain MIT 9313), this protein is Polyamine aminopropyltransferase.